A 168-amino-acid polypeptide reads, in one-letter code: uncharacterized protein (168 aa).

This is an uncharacterized protein from Bacillus subtilis (strain 168).